A 130-amino-acid chain; its full sequence is Small ribosomal subunit protein uS8 (130 aa).

It belongs to the universal ribosomal protein uS8 family. In terms of assembly, part of the 30S ribosomal subunit. Contacts proteins S5 and S12.

Functionally, one of the primary rRNA binding proteins, it binds directly to 16S rRNA central domain where it helps coordinate assembly of the platform of the 30S subunit. In Pseudoalteromonas translucida (strain TAC 125), this protein is Small ribosomal subunit protein uS8.